We begin with the raw amino-acid sequence, 749 residues long: Cytosolic phospholipase A2 (749 aa).

The C2 domain occupies 1–124 (MASIDPYQHI…GEKKQVPFTF (124 aa)). A phospholipid binding region spans residues 1-178 (MASIDPYQHI…LRKLLGPEKT (178 aa)). Residues Asp-40, Thr-41, Asp-43, Asn-65, Asp-93, Ala-94, and Asn-95 each coordinate Ca(2+). In terms of domain architecture, PLA2c spans 138–740 (VCSSTDLRFS…NDVESRKLHH (603 aa)). Catalysis depends on Ser-229, which acts as the Nucleophile. The segment at 428-452 (HILGNDSSDSDDEMQEPKGTENAKA) is disordered. Over residues 442–452 (QEPKGTENAKA) the composition is skewed to basic and acidic residues. Asp-549 acts as the Proton acceptor in catalysis. The segment at 729-749 (SLNDVESRKLHHKDSQSKFQM) is disordered. Residues 733–749 (VESRKLHHKDSQSKFQM) show a composition bias toward basic and acidic residues.

The protein localises to the cytoplasm. Its subcellular location is the cytoplasmic vesicle. It catalyses the reaction a 1,2-diacyl-sn-glycero-3-phosphocholine + H2O = a 1-acyl-sn-glycero-3-phosphocholine + a fatty acid + H(+). It carries out the reaction a 1-acyl-sn-glycero-3-phosphocholine + H2O = sn-glycerol 3-phosphocholine + a fatty acid + H(+). With respect to regulation, stimulated by agonists such as ATP, EGF, thrombin and bradykinin as well as by cytosolic Ca(2+). Its function is as follows. Selectively hydrolyzes arachidonyl phospholipids in the sn-2 position releasing arachidonic acid. Together with its lysophospholipid activity, it is implicated in the initiation of the inflammatory response. The protein is Cytosolic phospholipase A2 (pla2g4a) of Xenopus laevis (African clawed frog).